Here is a 654-residue protein sequence, read N- to C-terminus: Coiled-coil domain-containing protein 81 (654 aa).

A disordered region spans residues 196 to 270; that stretch reads SRESYRKRPN…RERQSISPAK (75 aa). At Ser-206 the chain carries Phosphoserine. Composition is skewed to basic and acidic residues over residues 212–222 and 232–251; these read RIEHKETENKT and GENR…EGGA. 4 positions are modified to phosphoserine: Ser-273, Ser-275, Ser-296, and Ser-419. Over residues 293 to 302 the composition is skewed to polar residues; the sequence is ENLSSPGCQR. The disordered stretch occupies residues 293–318; that stretch reads ENLSSPGCQRNDNERPRTSPAPACQD. Residues 431-562 adopt a coiled-coil conformation; sequence SQSLLKQMES…QRRDLQMLQR (132 aa).

It localises to the cytoplasm. Its subcellular location is the cytoskeleton. The protein localises to the microtubule organizing center. The protein resides in the centrosome. The sequence is that of Coiled-coil domain-containing protein 81 (Ccdc81) from Mus musculus (Mouse).